We begin with the raw amino-acid sequence, 274 residues long: Large ribosomal subunit protein uL2cz/uL2cy (274 aa).

2 disordered regions span residues 1 to 22 (MAIH…DSQV) and 223 to 274 (MNPV…RRTK).

This sequence belongs to the universal ribosomal protein uL2 family. Part of the 50S ribosomal subunit.

It is found in the plastid. Its subcellular location is the chloroplast. This chain is Large ribosomal subunit protein uL2cz/uL2cy (rpl2-A), found in Phaseolus vulgaris (Kidney bean).